The chain runs to 77 residues: Epoxide hydrolase (77 aa).

Monomer.

The catalysed reaction is an epoxide + H2O = an ethanediol. Functionally, this enzyme acts on aliphatic epoxides. Its substrates include epichlorohydrin, epibromohydrin, epoxyoctane and styrene epoxide. In Pseudomonas sp. (strain AD1), this protein is Epoxide hydrolase.